The chain runs to 434 residues: Serine hydroxymethyltransferase (434 aa).

Residues leucine 128 and 132–134 each bind (6S)-5,6,7,8-tetrahydrofolate; that span reads GHL. Lysine 237 is subject to N6-(pyridoxal phosphate)lysine.

Belongs to the SHMT family. Homodimer. Requires pyridoxal 5'-phosphate as cofactor.

Its subcellular location is the cytoplasm. The enzyme catalyses (6R)-5,10-methylene-5,6,7,8-tetrahydrofolate + glycine + H2O = (6S)-5,6,7,8-tetrahydrofolate + L-serine. It functions in the pathway one-carbon metabolism; tetrahydrofolate interconversion. The protein operates within amino-acid biosynthesis; glycine biosynthesis; glycine from L-serine: step 1/1. In terms of biological role, catalyzes the reversible interconversion of serine and glycine with tetrahydrofolate (THF) serving as the one-carbon carrier. This reaction serves as the major source of one-carbon groups required for the biosynthesis of purines, thymidylate, methionine, and other important biomolecules. Also exhibits THF-independent aldolase activity toward beta-hydroxyamino acids, producing glycine and aldehydes, via a retro-aldol mechanism. This is Serine hydroxymethyltransferase from Corynebacterium efficiens (strain DSM 44549 / YS-314 / AJ 12310 / JCM 11189 / NBRC 100395).